Here is a 94-residue protein sequence, read N- to C-terminus: Large ribosomal subunit protein bL25 (94 aa).

The protein belongs to the bacterial ribosomal protein bL25 family. As to quaternary structure, part of the 50S ribosomal subunit; part of the 5S rRNA/L5/L18/L25 subcomplex. Contacts the 5S rRNA. Binds to the 5S rRNA independently of L5 and L18.

Its function is as follows. This is one of the proteins that binds to the 5S RNA in the ribosome where it forms part of the central protuberance. The polypeptide is Large ribosomal subunit protein bL25 (Pectobacterium atrosepticum (strain SCRI 1043 / ATCC BAA-672) (Erwinia carotovora subsp. atroseptica)).